The following is a 955-amino-acid chain: Aminopeptidase A (955 aa).

At 1–17 (MDIEDKSSKMHCMKGKH) the chain is on the cytoplasmic side. The chain crosses the membrane as a helical; Signal-anchor for type II membrane protein span at residues 18–38 (VAIICGVVIAVGLILGLGLGL). The Extracellular segment spans residues 39-955 (GLKPEACNPP…LENSEQPNFV (917 aa)). The tract at residues 49–69 (EDNGLLSTKPPTTSTPNVTNP) is disordered. Low complexity predominate over residues 55–69 (STKPPTTSTPNVTNP). N-linked (GlcNAc...) asparagine glycans are attached at residues asparagine 65, asparagine 118, and asparagine 192. Glutamate 218 provides a ligand contact to substrate. 3 N-linked (GlcNAc...) asparagine glycosylation sites follow: asparagine 312, asparagine 319, and asparagine 335. Substrate is bound at residue 352 to 356 (GAMEN). Histidine 388 serves as a coordination point for Zn(2+). Glutamate 389 functions as the Proton acceptor in the catalytic mechanism. 2 residues coordinate Zn(2+): histidine 392 and glutamate 411. N-linked (GlcNAc...) asparagine glycans are attached at residues asparagine 458, asparagine 547, asparagine 584, asparagine 592, asparagine 647, asparagine 674, asparagine 681, asparagine 759, asparagine 766, asparagine 823, and asparagine 836. Residue arginine 882 participates in substrate binding.

The protein belongs to the peptidase M1 family. In terms of assembly, homodimer; disulfide-linked. Zn(2+) is required as a cofactor.

It is found in the cell membrane. It carries out the reaction Release of N-terminal glutamate (and to a lesser extent aspartate) from a peptide.. With respect to regulation, the partially purified protein is inhibited by the aminopeptidase competitive inhibitors amastatin (Leu and acidic inhibitor), and bestatin (Leu inhibitor), by chelating agents EDTA, and 1,10-Phenanthroline, as well as by Zn(2+) ions. Substrate specificity is modulated by Ca(2+), Ba(2+), and Mn(2+) ions which enhances the enzymatic activity for cleavage of acidic residues. In terms of biological role, venom protein that cleaves N-terminal acidic residues from peptides with high potency in presence of calcium. It may have several roles in venom including alteration of blood pressure by cleaving circulating angiotensin-2, general degradation of host tissue, increase of permeability to other venom components, and/or processing of other toxins in the venom. The protein is Aminopeptidase A of Gloydius brevicauda (Korean slamosa snake).